We begin with the raw amino-acid sequence, 570 residues long: Zeta-carotene desaturase, chloroplastic/chromoplastic (570 aa).

Residues methionine 1–proline 16 show a composition bias toward low complexity. Residues methionine 1–alanine 33 form a disordered region.

The protein belongs to the zeta carotene desaturase family. NAD(+) is required as a cofactor. The cofactor is NADP(+). FAD serves as cofactor.

The protein localises to the plastid. The protein resides in the chloroplast. It is found in the chromoplast. The catalysed reaction is 9,9'-di-cis-zeta-carotene + 2 a quinone = 7,7',9,9'-tetra-cis-lycopene + 2 a quinol. The protein operates within carotenoid biosynthesis; lycopene biosynthesis. Functionally, catalyzes the conversion of zeta-carotene to lycopene via the intermediary of neurosporene. It carries out two consecutive desaturations (introduction of double bonds) at positions C-7 and C-7'. The protein is Zeta-carotene desaturase, chloroplastic/chromoplastic (ZDS1) of Zea mays (Maize).